We begin with the raw amino-acid sequence, 490 residues long: Probable glycine dehydrogenase (decarboxylating) subunit 2 (490 aa).

Lysine 273 is subject to N6-(pyridoxal phosphate)lysine.

Belongs to the GcvP family. C-terminal subunit subfamily. The glycine cleavage system is composed of four proteins: P, T, L and H. In this organism, the P 'protein' is a heterodimer of two subunits. Pyridoxal 5'-phosphate is required as a cofactor.

The enzyme catalyses N(6)-[(R)-lipoyl]-L-lysyl-[glycine-cleavage complex H protein] + glycine + H(+) = N(6)-[(R)-S(8)-aminomethyldihydrolipoyl]-L-lysyl-[glycine-cleavage complex H protein] + CO2. The glycine cleavage system catalyzes the degradation of glycine. The P protein binds the alpha-amino group of glycine through its pyridoxal phosphate cofactor; CO(2) is released and the remaining methylamine moiety is then transferred to the lipoamide cofactor of the H protein. This Staphylococcus aureus (strain MSSA476) protein is Probable glycine dehydrogenase (decarboxylating) subunit 2.